A 2036-amino-acid polypeptide reads, in one-letter code: Putative mediator of RNA polymerase II transcription subunit 24 (2036 aa).

Disordered stretches follow at residues 51-70 (NNNN…NNNV), 159-184 (DNIE…NNIG), 212-451 (SPSP…QTTT), 501-580 (KSVN…NNNN), 754-840 (NLKN…SHQK), 928-1124 (NNNN…NKDL), 1375-1419 (NNKN…NNNN), and 1565-1608 (NSSA…NGDT). A compositionally biased stretch (low complexity) spans 212–229 (SPSPSSSSSSSTSPSSQQ). Residues 260-270 (EIMKVKEEPIK) are compositionally biased toward basic and acidic residues. Low complexity-rich tracts occupy residues 273-291 (TTTT…STTT), 300-311 (TNGNGEETTITT), 387-451 (QPQP…QTTT), 501-539 (KSVN…NSNN), 547-580 (NNNN…NNNN), and 754-770 (NLKN…NSNG). The stretch at 505-584 (NNNNNNNNNN…NNNNNNINNI (80 aa)) forms a coiled coil. Residues 778–787 (GSSTDGSNKL) are compositionally biased toward polar residues. Low complexity-rich tracts occupy residues 788-808 (SSTN…LNGN) and 928-943 (NNNN…NNKN). Residues 943–977 (NKNSKKSNNKNKNNKNNNKKNKNNNNNNNNNNNNN) adopt a coiled-coil conformation. Over residues 944 to 964 (KNSKKSNNKNKNNKNNNKKNK) the composition is skewed to basic residues. Composition is skewed to low complexity over residues 965–999 (NNNN…NNNN), 1017–1118 (NNNN…NNNN), 1385–1419 (SNNS…NNNN), 1565–1584 (NSSA…LPKS), and 1594–1608 (SSNT…NGDT). Positions 1915–1968 (SKNQSLKKKQKLKQKKQQHNNNNGGEYNIDQDHIEQIQQQQQQYQKQQQQRKDE) form a coiled coil.

It belongs to the Mediator complex subunit 24 family. Component of the Mediator complex.

The protein resides in the nucleus. Its function is as follows. Component of the Mediator complex, a coactivator involved in the regulated transcription of nearly all RNA polymerase II-dependent genes. Mediator functions as a bridge to convey information from gene-specific regulatory proteins to the basal RNA polymerase II transcription machinery. Mediator is recruited to promoters by direct interactions with regulatory proteins and serves as a scaffold for the assembly of a functional preinitiation complex with RNA polymerase II and the general transcription factors. This is Putative mediator of RNA polymerase II transcription subunit 24 (med24) from Dictyostelium discoideum (Social amoeba).